Reading from the N-terminus, the 284-residue chain is Phosphonates import ATP-binding protein PhnC 2 (284 aa).

Residues Ile5–Ala253 form the ABC transporter domain. An ATP-binding site is contributed by Gly38 to Ser45.

This sequence belongs to the ABC transporter superfamily. Phosphonates importer (TC 3.A.1.9.1) family. As to quaternary structure, the complex is composed of two ATP-binding proteins (PhnC), two transmembrane proteins (PhnE) and a solute-binding protein (PhnD).

It is found in the cell inner membrane. The catalysed reaction is phosphonate(out) + ATP + H2O = phosphonate(in) + ADP + phosphate + H(+). Functionally, part of the ABC transporter complex PhnCDE involved in phosphonates import. Responsible for energy coupling to the transport system. The sequence is that of Phosphonates import ATP-binding protein PhnC 2 from Cupriavidus necator (strain ATCC 17699 / DSM 428 / KCTC 22496 / NCIMB 10442 / H16 / Stanier 337) (Ralstonia eutropha).